Reading from the N-terminus, the 540-residue chain is Suppressor of tumorigenicity 7 protein-like (540 aa).

4 consecutive transmembrane segments (helical) span residues 24 to 44 (WSWT…VYVL), 68 to 88 (FYVA…IFEW), 475 to 495 (LPFF…LAML), and 502 to 522 (LMGV…GFFA).

Belongs to the ST7 family.

Its subcellular location is the membrane. In Danio rerio (Zebrafish), this protein is Suppressor of tumorigenicity 7 protein-like (st7l).